Reading from the N-terminus, the 583-residue chain is Mitogen-activated protein kinase 4 (583 aa).

A Protein kinase domain is found at phenylalanine 20 to methionine 312. Residues leucine 26–valine 34 and lysine 49 each bind ATP. Catalysis depends on aspartate 149, which acts as the Proton acceptor. The residue at position 186 (serine 186) is a Phosphoserine; by PAK1, PAK2 and PAK3. The SEG motif signature appears at serine 186 to glycine 188. An FRIEDE motif motif is present at residues phenylalanine 328–glutamate 333. 2 stretches are compositionally biased toward basic and acidic residues: residues aspartate 366 to arginine 379 and valine 391 to serine 410. The interval aspartate 366–serine 410 is disordered. Serine 430 carries the post-translational modification Phosphoserine. A disordered region spans residues serine 495–proline 531.

The protein belongs to the protein kinase superfamily. CMGC Ser/Thr protein kinase family. MAP kinase subfamily. As to quaternary structure, homodimer. Heterodimer with ERK3/MAPK6. Interacts with (via FRIEDE motif) MAPKAPK5. The cofactor is Mg(2+). In terms of processing, phosphorylated at Ser-186 by PAK1, PAK2 and PAK3 resulting in catalytic activation. Phosphorylated by MAPKAPK5 at other sites.

Its subcellular location is the cytoplasm. It is found in the nucleus. It catalyses the reaction L-seryl-[protein] + ATP = O-phospho-L-seryl-[protein] + ADP + H(+). It carries out the reaction L-threonyl-[protein] + ATP = O-phospho-L-threonyl-[protein] + ADP + H(+). Its activity is regulated as follows. Activated by phosphorylation at Ser-186. Functionally, atypical MAPK protein. Phosphorylates microtubule-associated protein 2 (MAP2) and MAPKAPK5. The precise role of the complex formed with MAPKAPK5 is still unclear, but the complex follows a complex set of phosphorylation events: upon interaction with atypical MAPKAPK5, ERK4/MAPK4 is phosphorylated at Ser-186 and then mediates phosphorylation and activation of MAPKAPK5, which in turn phosphorylates ERK4/MAPK4. May promote entry in the cell cycle. The chain is Mitogen-activated protein kinase 4 (Mapk4) from Mus musculus (Mouse).